The chain runs to 645 residues: 1,4-alpha-glucan branching enzyme GlgB (645 aa).

Residue D309 is the Nucleophile of the active site. E352 acts as the Proton donor in catalysis. The segment at V619–R645 is disordered. Residues R636 to R645 are compositionally biased toward polar residues.

The protein belongs to the glycosyl hydrolase 13 family. GlgB subfamily. Monomer.

It catalyses the reaction Transfers a segment of a (1-&gt;4)-alpha-D-glucan chain to a primary hydroxy group in a similar glucan chain.. Its pathway is glycan biosynthesis; glycogen biosynthesis. Its function is as follows. Catalyzes the formation of the alpha-1,6-glucosidic linkages in glycogen by scission of a 1,4-alpha-linked oligosaccharide from growing alpha-1,4-glucan chains and the subsequent attachment of the oligosaccharide to the alpha-1,6 position. This chain is 1,4-alpha-glucan branching enzyme GlgB, found in Bacillus cereus (strain ATCC 10987 / NRS 248).